A 124-amino-acid chain; its full sequence is Holo-[acyl-carrier-protein] synthase (124 aa).

Mg(2+) contacts are provided by aspartate 8 and glutamate 58.

It belongs to the P-Pant transferase superfamily. AcpS family. Mg(2+) serves as cofactor.

It is found in the cytoplasm. It carries out the reaction apo-[ACP] + CoA = holo-[ACP] + adenosine 3',5'-bisphosphate + H(+). Functionally, transfers the 4'-phosphopantetheine moiety from coenzyme A to a Ser of acyl-carrier-protein. This chain is Holo-[acyl-carrier-protein] synthase, found in Lacticaseibacillus casei (strain BL23) (Lactobacillus casei).